The chain runs to 860 residues: Alanine--tRNA ligase (860 aa).

His563, His567, Cys665, and His669 together coordinate Zn(2+).

It belongs to the class-II aminoacyl-tRNA synthetase family. The cofactor is Zn(2+).

It localises to the cytoplasm. It catalyses the reaction tRNA(Ala) + L-alanine + ATP = L-alanyl-tRNA(Ala) + AMP + diphosphate. Its function is as follows. Catalyzes the attachment of alanine to tRNA(Ala) in a two-step reaction: alanine is first activated by ATP to form Ala-AMP and then transferred to the acceptor end of tRNA(Ala). Also edits incorrectly charged Ser-tRNA(Ala) and Gly-tRNA(Ala) via its editing domain. In Vibrio parahaemolyticus serotype O3:K6 (strain RIMD 2210633), this protein is Alanine--tRNA ligase.